Consider the following 258-residue polypeptide: Very-long-chain aldehyde decarbonylase GL1-9 (258 aa).

5 consecutive transmembrane segments (helical) span residues 13–33 (MGTF…QLVL), 63–83 (GVLL…MVTS), 88–108 (VVVQ…MLVM), 149–169 (PLEG…VSGM), and 175–195 (VFFF…LWLP). Residues 101 to 237 (FLVAMLVMDS…FSIWDRILGT (137 aa)) enclose the Fatty acid hydroxylase domain.

Belongs to the sterol desaturase family. As to quaternary structure, homodimer.

The protein localises to the endoplasmic reticulum membrane. The enzyme catalyses a long-chain fatty aldehyde + 2 NADPH + O2 + H(+) = a long-chain alkane + formate + 2 NADP(+) + H2O. Functionally, aldehyde decarbonylase involved in the conversion of aldehydes to alkanes. Core component of a very-long-chain alkane synthesis complex. The sequence is that of Very-long-chain aldehyde decarbonylase GL1-9 from Oryza sativa subsp. indica (Rice).